Consider the following 307-residue polypeptide: Aspartate carbamoyltransferase catalytic subunit (307 aa).

Residues Arg54 and Thr55 each contribute to the carbamoyl phosphate site. Lys83 lines the L-aspartate pocket. Residues Arg104, His132, and Gln135 each coordinate carbamoyl phosphate. L-aspartate contacts are provided by Arg165 and Arg228. Carbamoyl phosphate is bound by residues Leu267 and Pro268.

It belongs to the aspartate/ornithine carbamoyltransferase superfamily. ATCase family. Heterododecamer (2C3:3R2) of six catalytic PyrB chains organized as two trimers (C3), and six regulatory PyrI chains organized as three dimers (R2).

It catalyses the reaction carbamoyl phosphate + L-aspartate = N-carbamoyl-L-aspartate + phosphate + H(+). The protein operates within pyrimidine metabolism; UMP biosynthesis via de novo pathway; (S)-dihydroorotate from bicarbonate: step 2/3. Catalyzes the condensation of carbamoyl phosphate and aspartate to form carbamoyl aspartate and inorganic phosphate, the committed step in the de novo pyrimidine nucleotide biosynthesis pathway. The chain is Aspartate carbamoyltransferase catalytic subunit from Clostridium botulinum (strain Okra / Type B1).